The following is a 699-amino-acid chain: Auxin response factor 10 (699 aa).

3 disordered regions span residues 108–136 (AAEA…DANN), 505–533 (TDLT…DDTK), and 551–595 (KNGN…SWSL). The segment covering 110–119 (EARREEENSR) has biased composition (basic and acidic residues). Over residues 125-135 (FAKTLTQSDAN) the composition is skewed to polar residues. Residues 125-227 (FAKTLTQSDA…NIHVGLRRAK (103 aa)) constitute a DNA-binding region (TF-B3). Residues 570-593 (PNTSEGSDSGVTQGSPTKNTTPSW) show a composition bias toward polar residues. The region spanning 613–693 (PGQCKVFVES…RKLRILTDAG (81 aa)) is the PB1 domain.

Belongs to the ARF family. In terms of assembly, homodimers and heterodimers.

It localises to the nucleus. Auxin response factors (ARFs) are transcriptional factors that bind specifically to the DNA sequence 5'-TGTCTC-3' found in the auxin-responsive promoter elements (AuxREs). In Oryza sativa subsp. indica (Rice), this protein is Auxin response factor 10 (ARF10).